The chain runs to 162 residues: Transcription antitermination protein RfaH (162 aa).

Belongs to the RfaH family. As to quaternary structure, interacts with both the nontemplate DNA and the RNA polymerase (RNAP). Monomer in solution.

In terms of biological role, enhances distal genes transcription elongation in a specialized subset of operons that encode extracytoplasmic components. RfaH is recruited into a multi-component RNA polymerase complex by the ops element, which is a short conserved DNA sequence located downstream of the main promoter of these operons. Once bound, RfaH suppresses pausing and inhibits Rho-dependent and intrinsic termination at a subset of sites. Termination signals are bypassed, which allows complete synthesis of long RNA chains. Enhances expression of several operons involved in synthesis of lipopolysaccharides, exopolysaccharides, hemolysin, and sex factor. Also negatively controls expression and surface presentation of AG43 and possibly another AG43-independent factor that mediates cell-cell interactions and biofilm formation. This Escherichia coli (strain K12) protein is Transcription antitermination protein RfaH.